The primary structure comprises 81 residues: Defensin-like protein 144 (81 aa).

The N-terminal stretch at 1 to 24 (MKNSFRFSFTVITTFIICVLVSGA) is a signal peptide. Disulfide bonds link C30–C74, C42–C61, C47–C69, and C51–C71.

It belongs to the DEFL family.

The protein localises to the secreted. The sequence is that of Defensin-like protein 144 (LCR10) from Arabidopsis thaliana (Mouse-ear cress).